Here is a 187-residue protein sequence, read N- to C-terminus: Lysozyme 3 (187 aa).

The first 18 residues, Met-1–Gly-18, serve as a signal peptide directing secretion. An I-type lysozyme domain is found at Thr-68–Ser-183. 6 disulfide bridges follow: Cys-75–Cys-151, Cys-80–Cys-86, Cys-91–Cys-100, Cys-113–Cys-133, Cys-123–Cys-129, and Cys-147–Cys-165. Glu-83 acts as the Proton donor in catalysis. Catalysis depends on Asp-94, which acts as the Nucleophile. Lys-106–Asp-112 contacts substrate. Residues Tyr-137 and His-158–Gly-160 contribute to the substrate site.

In terms of tissue distribution, highest levels of expression detected in the digestive glands. Lower levels in the mantle, labial palps, gills and style-midgut sac, and lowest levels detected in the hemocytes. Not detected in the gonads.

The protein resides in the secreted. It catalyses the reaction Hydrolysis of (1-&gt;4)-beta-linkages between N-acetylmuramic acid and N-acetyl-D-glucosamine residues in a peptidoglycan and between N-acetyl-D-glucosamine residues in chitodextrins.. Functionally, has antibacterial activity against the Gram-negative bacterium E.coli. No antibacterial activity detected against the Gram-negative bacterium V.vulnificus. The polypeptide is Lysozyme 3 (Crassostrea virginica (Eastern oyster)).